The following is a 364-amino-acid chain: Putative apoptosis inhibitor ORF42 (364 aa).

One copy of the BIR 1 repeat lies at 24–89; the sequence is RLATFRGYEY…CREGVVSAPQ (66 aa). Residues 83-126 are disordered; that stretch reads GVVSAPQQQPPPPPSTSIGAVGGDPRPEDMNVPERGWDPPMSKD. Residues 117 to 126 show a composition bias toward basic and acidic residues; it reads RGWDPPMSKD. 2 BIR repeats span residues 127–193 and 236–300; these read PKST…PLVV and RIAS…ANMA. Residues 315-350 form an RING-type zinc finger; it reads CVICLGAKADTILKPCLHYSLCYGCSTQVQKCPLCR.

May act as an apoptosis inhibitor. The sequence is that of Putative apoptosis inhibitor ORF42 from Magallana gigas (Pacific oyster).